The primary structure comprises 375 residues: Enoyl-[acyl-carrier-protein] reductase [NADH] 1, chloroplastic (375 aa).

Residues 1 to 67 (MGASAATGMQ…SSKRSGVAIR (67 aa)) constitute a chloroplast transit peptide. Residues Gly91, Tyr98, 155–156 (DA), 202–203 (SL), and Leu252 each bind NAD(+). Residues Tyr254 and Tyr264 each act as proton acceptor in the active site. Residues Lys272 and 302–306 (LGSRA) each bind NAD(+).

Belongs to the short-chain dehydrogenases/reductases (SDR) family. FabI subfamily. Homotetramer.

Its subcellular location is the plastid. The protein localises to the chloroplast. The enzyme catalyses a 2,3-saturated acyl-[ACP] + NAD(+) = a (2E)-enoyl-[ACP] + NADH + H(+). The protein operates within lipid metabolism; fatty acid biosynthesis. Functionally, catalyzes the NAD-dependent reduction of a carbon-carbon double bond in an enoyl moiety that is covalently linked to an acyl carrier protein (ACP). Catalyzes the last reduction step in the de novo synthesis cycle of fatty acids. Involved in the elongation cycle of fatty acids which are used in lipid metabolism. Required for normal plant growth. The polypeptide is Enoyl-[acyl-carrier-protein] reductase [NADH] 1, chloroplastic (Oryza sativa subsp. japonica (Rice)).